The sequence spans 390 residues: MPDTNSTINLSLSTRVTLAFFMSLVAFAIMLGNALVILAFVVDKNLRHRSSYFFLNLAISDFFVGVISIPLYIPHTLFEWDFGKEICVFWLTTDYLLCTASVYNIVLISYDRYLSVSNAVSYRTQHTGVLKIVTLMVAVWVLAFLVNGPMILVSESWKDEGSECEPGFFSEWYILAITSFLEFVIPVILVAYFNMNIYWSLWKRDHLSRCQSHPGLTAVSSNICGHSFRGRLSSRRSLSASTEVPASFHSERQRRKSSLMFSSRTKMNSNTIASKMGSFSQSDSVALHQREHVELLRARRLAKSLAILLGVFAVCWAPYSLFTIVLSFYSSATGPKSVWYRIAFWLQWFNSFVNPLLYPLCHKRFQKAFLKIFCIKKQPLPSQHSRSVSS.

Over 1–19 (MPDTNSTINLSLSTRVTLA) the chain is Extracellular. Asparagine 5 and asparagine 9 each carry an N-linked (GlcNAc...) asparagine glycan. The helical transmembrane segment at 20 to 40 (FFMSLVAFAIMLGNALVILAF) threads the bilayer. The Cytoplasmic portion of the chain corresponds to 41–52 (VVDKNLRHRSSY). A helical transmembrane segment spans residues 53–73 (FFLNLAISDFFVGVISIPLYI). Over 74 to 87 (PHTLFEWDFGKEIC) the chain is Extracellular. Cysteine 87 and cysteine 164 are joined by a disulfide. A helical membrane pass occupies residues 88-108 (VFWLTTDYLLCTASVYNIVLI). Topologically, residues 109 to 131 (SYDRYLSVSNAVSYRTQHTGVLK) are cytoplasmic. Residues 132–152 (IVTLMVAVWVLAFLVNGPMIL) form a helical membrane-spanning segment. The Extracellular portion of the chain corresponds to 153–172 (VSESWKDEGSECEPGFFSEW). The helical transmembrane segment at 173–193 (YILAITSFLEFVIPVILVAYF) threads the bilayer. Over 194–304 (NMNIYWSLWK…LLRARRLAKS (111 aa)) the chain is Cytoplasmic. A helical membrane pass occupies residues 305–325 (LAILLGVFAVCWAPYSLFTIV). At 326–341 (LSFYSSATGPKSVWYR) the chain is on the extracellular side. A helical transmembrane segment spans residues 342 to 362 (IAFWLQWFNSFVNPLLYPLCH). Residues 363-390 (KRFQKAFLKIFCIKKQPLPSQHSRSVSS) are Cytoplasmic-facing.

Belongs to the G-protein coupled receptor 1 family. In terms of assembly, interacts with TSPAN4. Expressed primarily in the bone marrow and eosinophils. Shows preferential distribution in cells of immunological relevance such as T-cells, dendritic cells, monocytes, mast cells, neutrophils. Also expressed in a wide variety of peripheral tissues, including the heart, kidney, liver, lung, pancreas, skeletal muscle, prostate, small intestine, spleen, testis, colon, fetal liver and lymph node.

It localises to the cell membrane. Functionally, the H4 subclass of histamine receptors could mediate the histamine signals in peripheral tissues. Displays a significant level of constitutive activity (spontaneous activity in the absence of agonist). The chain is Histamine H4 receptor (HRH4) from Homo sapiens (Human).